A 559-amino-acid polypeptide reads, in one-letter code: Formate--tetrahydrofolate ligase (559 aa).

68–75 (TPAGEGKT) lines the ATP pocket.

It belongs to the formate--tetrahydrofolate ligase family.

The catalysed reaction is (6S)-5,6,7,8-tetrahydrofolate + formate + ATP = (6R)-10-formyltetrahydrofolate + ADP + phosphate. The protein operates within one-carbon metabolism; tetrahydrofolate interconversion. The protein is Formate--tetrahydrofolate ligase of Rhizobium etli (strain CIAT 652).